The following is a 359-amino-acid chain: Peptide chain release factor 1 (359 aa).

Gln-236 carries the post-translational modification N5-methylglutamine.

This sequence belongs to the prokaryotic/mitochondrial release factor family. Methylated by PrmC. Methylation increases the termination efficiency of RF1.

It localises to the cytoplasm. Peptide chain release factor 1 directs the termination of translation in response to the peptide chain termination codons UAG and UAA. In Streptococcus pneumoniae serotype 19F (strain G54), this protein is Peptide chain release factor 1.